The primary structure comprises 305 residues: Ferredoxin--NADP reductase (305 aa).

FAD is bound by residues Glu31, Tyr42, Val82, and Asp274.

The protein belongs to the ferredoxin--NADP reductase type 2 family. As to quaternary structure, homodimer. FAD is required as a cofactor.

The enzyme catalyses 2 reduced [2Fe-2S]-[ferredoxin] + NADP(+) + H(+) = 2 oxidized [2Fe-2S]-[ferredoxin] + NADPH. The protein is Ferredoxin--NADP reductase of Ignicoccus hospitalis (strain KIN4/I / DSM 18386 / JCM 14125).